The primary structure comprises 339 residues: MRRVTLFLNGSPSNGKVVAVYGTLSDLLSVASSKLGIKATSVYNGKGGLIDDIALIRDDDVLFVCEGEPFIDPQTDARPPGGLLGSHTDWLTLNVGGRYFTTTRSTLVNKEPDSMLAHMFKDKGVWGNKQDHRGAFLIDRSPEYFEPILNYLRHGQLIVNDGINLLGVLEEARFFGIDSLIEHLEVAIKNSQPPEDHSPISRKEFVRFLLATPTKSELRCQCANLQGVKMLCSNAEGASLRLCNFEDPSGLKANLEGANLKGVDMEGSQMTGINLRVATLKNAKLKNCNLRGATLAGTDLENCDLSGCDLQEANLRGSNVKGAIFEEMLTPLHMSQSVR.

The 80-residue stretch at 3 to 82 folds into the KHA domain; that stretch reads RVTLFLNGSP…PQTDARPPGG (80 aa). S11 carries the phosphoserine modification. The 73-residue stretch at 89–161 folds into the BTB domain; that stretch reads DWLTLNVGGR…LRHGQLIVND (73 aa). 3 consecutive Pentapeptide repeat domains span residues 223-247, 253-292, and 293-327; these read ANLQ…NFED, ANLE…NLRG, and ATLA…IFEE.

In terms of assembly, forms pentamers. Component of a complex mades of five KCTD9 and five CUL3 subunits.

It participates in protein modification; protein ubiquitination. Functionally, substrate-specific adapter of a BCR (BTB-CUL3-RBX1) E3 ubiquitin-protein ligase complex, which mediates the ubiquitination of target proteins, leading to their degradation by the proteasome. This Mus musculus (Mouse) protein is BTB/POZ domain-containing protein KCTD9 (Kctd9).